The chain runs to 365 residues: 1-acyl-sn-glycerol-3-phosphate acyltransferase epsilon (365 aa).

Residues 15-35 form a helical membrane-spanning segment; sequence LLPSVLLLGSAPTYLLAWTLW. An HXXXXD motif motif is present at residues 93–98; sequence HQSTVD. A helical transmembrane segment spans residues 345–365; sequence LYMGTWLYGTLLGCLWFVIKA.

It belongs to the 1-acyl-sn-glycerol-3-phosphate acyltransferase family. Widely expressed.

The protein localises to the endoplasmic reticulum membrane. It localises to the nucleus envelope. The protein resides in the mitochondrion. It catalyses the reaction a 1-acyl-sn-glycero-3-phosphate + an acyl-CoA = a 1,2-diacyl-sn-glycero-3-phosphate + CoA. The catalysed reaction is 1-(9Z-octadecenoyl)-sn-glycero-3-phosphate + tetradecanoyl-CoA = 1-(9Z)-octadecenoyl-2-tetradecanoyl-sn-glycero-3-phosphate + CoA. The enzyme catalyses pentadecanoyl-CoA + 1-(9Z-octadecenoyl)-sn-glycero-3-phosphate = 1-(9Z)-octadecenoyl-2-pentadecanoyl-sn-glycero-3-phosphate + CoA. It carries out the reaction 1-(9Z-octadecenoyl)-sn-glycero-3-phosphate + octadecanoyl-CoA = 1-(9Z-octadecenoyl)-2-octadecanoyl-sn-glycero-3-phosphate + CoA. It catalyses the reaction nonadecanoyl-CoA + 1-(9Z-octadecenoyl)-sn-glycero-3-phosphate = 1-(9Z)-octadecenoyl-2-nonadecanoyl-sn-glycero-3-phosphate + CoA. The catalysed reaction is 1-(9Z-octadecenoyl)-sn-glycero-3-phosphoethanolamine + (9Z)-octadecenoyl-CoA = 1,2-di-(9Z-octadecenoyl)-sn-glycero-3-phosphoethanolamine + CoA. The enzyme catalyses 1-(9Z-octadecenoyl)-sn-glycero-3-phosphocholine + (9Z)-octadecenoyl-CoA = 1,2-di-(9Z-octadecenoyl)-sn-glycero-3-phosphocholine + CoA. It carries out the reaction 1-(9Z-octadecenoyl)-sn-glycero-3-phospho-(1D-myo-inositol) + (5Z,8Z,11Z,14Z)-eicosatetraenoyl-CoA = 1-(9Z-octadecenoyl)-2-(5Z,8Z,11Z,14Z-eicosatetraenoyl)-sn-glycero-3-phospho-1D-myo-inositol + CoA. It catalyses the reaction 1-(9Z-octadecenoyl)-sn-glycero-3-phospho-L-serine + (9Z)-octadecenoyl-CoA = 1,2-di-(9Z)-octadecenoyl-sn-glycero-3-phospho-L-serine + CoA. The catalysed reaction is 1-(9Z-octadecenoyl)-sn-glycero-3-phospho-L-serine + (5Z,8Z,11Z,14Z)-eicosatetraenoyl-CoA = 1-(9Z-octadecenoyl)-2-(5Z,8Z,11Z,14Z-eicosatetraenoyl)-sn-glycero-3-phospho-L-serine + CoA. The enzyme catalyses 1-hexadecanoyl-sn-glycero-3-phosphate + (9Z)-octadecenoyl-CoA = 1-hexadecanoyl-2-(9Z-octadecenoyl)-sn-glycero-3-phosphate + CoA. It carries out the reaction 1-heptadecanoyl-sn-glycero-3-phosphate + (9Z)-octadecenoyl-CoA = 1-heptadecanoyl-2-(9Z)-octadecenoyl-sn-glycero-3-phosphate + CoA. It catalyses the reaction 1-(5Z,8Z,11Z,14Z-eicosatetraenoyl)-sn-glycero-3-phosphate + (9Z)-octadecenoyl-CoA = 1-(5Z,8Z,11Z,14Z)-eicosatetraenoyl-2-(9Z)-octadecenoyl-sn-glycero-3-phosphate + CoA. The catalysed reaction is 1-octadecanoyl-sn-glycero-3-phosphate + (9Z)-octadecenoyl-CoA = 1-octadecanoyl-2-(9Z-octadecenoyl)-sn-glycero-3-phosphate + CoA. The enzyme catalyses 1-(9Z-octadecenoyl)-sn-glycero-3-phosphate + (5Z,8Z,11Z,14Z)-eicosatetraenoyl-CoA = 1-(9Z)-octadecenoyl-2-(5Z,8Z,11Z,14Z)-eicosatetraenoyl-sn-glycero-3-phosphate + CoA. It carries out the reaction heptadecanoyl-CoA + 1-(9Z-octadecenoyl)-sn-glycero-3-phosphate = 1-(9Z)-octadecenoyl-2-heptadecanoyl-sn-glycero-3-phosphate + CoA. It catalyses the reaction 1-(9Z-octadecenoyl)-sn-glycero-3-phosphocholine + (5Z,8Z,11Z,14Z)-eicosatetraenoyl-CoA = 1-(9Z)-octadecenoyl-2-(5Z,8Z,11Z,14Z)-icosatetraenoyl-sn-glycero-3-phosphocholine + CoA. The catalysed reaction is 1-(9Z-octadecenoyl)-sn-glycero-3-phosphate + (9Z)-octadecenoyl-CoA = 1,2-di-(9Z-octadecenoyl)-sn-glycero-3-phosphate + CoA. The enzyme catalyses 1-(9Z-octadecenoyl)-sn-glycero-3-phosphate + hexadecanoyl-CoA = 1-hexadecanoyl-2-(9Z-octadecenoyl)-sn-glycero-3-phosphate + CoA. The protein operates within phospholipid metabolism; CDP-diacylglycerol biosynthesis; CDP-diacylglycerol from sn-glycerol 3-phosphate: step 2/3. Converts 1-acyl-sn-glycerol-3-phosphate (lysophosphatidic acid or LPA) into 1,2-diacyl-sn-glycerol-3-phosphate (phosphatidic acid or PA) by incorporating an acyl moiety at the sn-2 position of the glycerol backbone. Acts on LPA containing saturated or unsaturated fatty acids C15:0-C20:4 at the sn-1 position using C18:1-CoA as the acyl donor. Also acts on lysophosphatidylethanolamine using oleoyl-CoA, but not arachidonoyl-CoA, and lysophosphatidylinositol using arachidonoyl-CoA, but not oleoyl-CoA. Activity toward lysophosphatidylglycerol not detectable. This chain is 1-acyl-sn-glycerol-3-phosphate acyltransferase epsilon (Agpat5), found in Mus musculus (Mouse).